We begin with the raw amino-acid sequence, 697 residues long: Ion-translocating oxidoreductase complex subunit C (697 aa).

4Fe-4S ferredoxin-type domains follow at residues 366–397 (AEMG…QQLY) and 407–436 (KARN…VQYY). 8 residues coordinate [4Fe-4S] cluster: Cys-377, Cys-380, Cys-383, Cys-387, Cys-416, Cys-419, Cys-422, and Cys-426. Residues 576–674 (AQLESEPVKS…APEEDPRKAA (99 aa)) form a disordered region. The span at 581-596 (EPVKSESEAPEEDPRK) shows a compositional bias: basic and acidic residues. Over residues 597–615 (AAVAAAIARVKAKKAAQAQ) the composition is skewed to low complexity. Residues 619 to 634 (EPVKSESEAPEEDPRK) show a composition bias toward basic and acidic residues. The segment covering 635 to 653 (AAVAAAIARVKAKKAAQAQ) has biased composition (low complexity). The segment covering 657 to 672 (EPVKSESEAPEEDPRK) has biased composition (basic and acidic residues).

It belongs to the 4Fe4S bacterial-type ferredoxin family. RnfC subfamily. The complex is composed of six subunits: RnfA, RnfB, RnfC, RnfD, RnfE and RnfG. It depends on [4Fe-4S] cluster as a cofactor.

The protein localises to the cell inner membrane. In terms of biological role, part of a membrane-bound complex that couples electron transfer with translocation of ions across the membrane. The sequence is that of Ion-translocating oxidoreductase complex subunit C from Yersinia enterocolitica serotype O:8 / biotype 1B (strain NCTC 13174 / 8081).